The primary structure comprises 648 residues: Macrolide export ATP-binding/permease protein MacB (648 aa).

The region spanning 5 to 243 is the ABC transporter domain; sequence LELKDIRRSY…AGGTEPVVNT (239 aa). 41–48 provides a ligand contact to ATP; it reads GASGSGKS. The next 4 membrane-spanning stretches (helical) occupy residues 273-293, 523-543, 576-596, and 600-620; these read LLTMLGIIIGIASVVSIVVVG, LFLTLVAVISLVVGGIGVMNI, AVLVCLVGGALGITLSLLIAF, and LFLPGWEIGFSPLALLLAFLC.

The protein belongs to the ABC transporter superfamily. Macrolide exporter (TC 3.A.1.122) family. As to quaternary structure, homodimer. Part of the tripartite efflux system MacAB-TolC, which is composed of an inner membrane transporter, MacB, a periplasmic membrane fusion protein, MacA, and an outer membrane component, TolC. The complex forms a large protein conduit and can translocate molecules across both the inner and outer membranes. Interacts with MacA.

The protein resides in the cell inner membrane. Its function is as follows. Part of the tripartite efflux system MacAB-TolC. MacB is a non-canonical ABC transporter that contains transmembrane domains (TMD), which form a pore in the inner membrane, and an ATP-binding domain (NBD), which is responsible for energy generation. Confers resistance against macrolides. The protein is Macrolide export ATP-binding/permease protein MacB of Shigella flexneri.